Reading from the N-terminus, the 206-residue chain is Protein GrpE (206 aa).

Over residues 1–10 (MTDPDLHQND) the composition is skewed to basic and acidic residues. The interval 1–38 (MTDPDLHQNDPENPAQASEPVVSKPYIMPDDPETGSAE) is disordered.

This sequence belongs to the GrpE family. Homodimer.

Its subcellular location is the cytoplasm. Participates actively in the response to hyperosmotic and heat shock by preventing the aggregation of stress-denatured proteins, in association with DnaK and GrpE. It is the nucleotide exchange factor for DnaK and may function as a thermosensor. Unfolded proteins bind initially to DnaJ; upon interaction with the DnaJ-bound protein, DnaK hydrolyzes its bound ATP, resulting in the formation of a stable complex. GrpE releases ADP from DnaK; ATP binding to DnaK triggers the release of the substrate protein, thus completing the reaction cycle. Several rounds of ATP-dependent interactions between DnaJ, DnaK and GrpE are required for fully efficient folding. The chain is Protein GrpE from Bradyrhizobium sp. (strain ORS 278).